The following is a 168-amino-acid chain: Putative apoptosis regulator A9 (168 aa).

Residues 143 to 162 (SAFYFLTAAASCLTLLLLYF) form a helical membrane-spanning segment.

Its subcellular location is the host membrane. Its function is as follows. Suppresses apoptosis in host cell and thus facilitates production of progeny virions. This is Putative apoptosis regulator A9 (A9) from Alcelaphine herpesvirus 1 (strain C500) (AlHV-1).